The primary structure comprises 287 residues: Glutamate racemase (287 aa).

Substrate is bound by residues 32 to 33 and 64 to 65; these read DS and YG. Cysteine 96 serves as the catalytic Proton donor/acceptor. 97–98 contributes to the substrate binding site; sequence NT. Cysteine 208 acts as the Proton donor/acceptor in catalysis. Residue 209–210 coordinates substrate; that stretch reads TH.

The protein belongs to the aspartate/glutamate racemases family.

The catalysed reaction is L-glutamate = D-glutamate. It functions in the pathway cell wall biogenesis; peptidoglycan biosynthesis. Its function is as follows. Provides the (R)-glutamate required for cell wall biosynthesis. The chain is Glutamate racemase from Yersinia enterocolitica serotype O:8 / biotype 1B (strain NCTC 13174 / 8081).